A 311-amino-acid polypeptide reads, in one-letter code: Ribosomal RNA small subunit methyltransferase H (311 aa).

Residues 32 to 34 (AGH), aspartate 52, phenylalanine 79, aspartate 100, and glutamine 107 contribute to the S-adenosyl-L-methionine site.

Belongs to the methyltransferase superfamily. RsmH family.

Its subcellular location is the cytoplasm. The enzyme catalyses cytidine(1402) in 16S rRNA + S-adenosyl-L-methionine = N(4)-methylcytidine(1402) in 16S rRNA + S-adenosyl-L-homocysteine + H(+). Its function is as follows. Specifically methylates the N4 position of cytidine in position 1402 (C1402) of 16S rRNA. The chain is Ribosomal RNA small subunit methyltransferase H from Staphylococcus aureus (strain Mu3 / ATCC 700698).